A 328-amino-acid chain; its full sequence is tRNA uridine(34) hydroxylase (328 aa).

Positions 130–224 (LDKDTVVLDT…YGKDPEVQGE (95 aa)) constitute a Rhodanese domain. The Cysteine persulfide intermediate role is filled by C184.

The protein belongs to the TrhO family.

The catalysed reaction is uridine(34) in tRNA + AH2 + O2 = 5-hydroxyuridine(34) in tRNA + A + H2O. Functionally, catalyzes oxygen-dependent 5-hydroxyuridine (ho5U) modification at position 34 in tRNAs. The protein is tRNA uridine(34) hydroxylase of Streptococcus pneumoniae serotype 19F (strain G54).